A 311-amino-acid chain; its full sequence is Trem-like transcript 1 protein (311 aa).

An N-terminal signal peptide occupies residues 1–15 (MGLTLLLLLLLGLEG). In terms of domain architecture, Ig-like V-type spans 16–121 (QGIVGSLPEV…PQILHRVSLN (106 aa)). At 16–162 (QGIVGSLPEV…EPSQDEKSIP (147 aa)) the chain is on the extracellular side. Disulfide bonds link cysteine 38/cysteine 104 and cysteine 52/cysteine 59. Residues 163-183 (LIWGAVLLVGLLVAAVVLFAV) form a helical membrane-spanning segment. Over 184 to 311 (MAKRKQGNRL…NPPNNQTPSS (128 aa)) the chain is Cytoplasmic. Cysteine 196 carries the S-palmitoyl cysteine lipid modification. Residues 229 to 263 (VPHIRLDSPPSFDNTTYTSLPLDSPSGKPSLPAPS) are disordered. Residues 239–249 (SFDNTTYTSLP) show a composition bias toward polar residues. Residues 279–284 (VTYATV) carry the ITIM motif. A disordered region spans residues 287–311 (PGGNKGGGTSCGPAQNPPNNQTPSS).

As to quaternary structure, when phosphorylated, interacts with PTPN6. When phosphorylated, interacts with PTPN11. Phosphorylated on tyrosine residues. In terms of tissue distribution, detected in platelets, monocytic leukemia and in T-cell leukemia.

It localises to the cell membrane. Its subcellular location is the cytoplasm. Its function is as follows. Cell surface receptor that may play a role in the innate and adaptive immune response. This chain is Trem-like transcript 1 protein (TREML1), found in Homo sapiens (Human).